Reading from the N-terminus, the 110-residue chain is IQ domain-containing protein J (110 aa).

The IQ domain occupies 47–67 (ESKVKIIQRAWREYLQRQDPL). The segment at 63-99 (RQDPLEKRSPSPPSVSSDKLSSSVSMNTFSDSSTPVS) is disordered. Over residues 76 to 87 (SVSSDKLSSSVS) the composition is skewed to low complexity. The segment covering 88 to 99 (MNTFSDSSTPVS) has biased composition (polar residues).

This is IQ domain-containing protein J from Mus musculus (Mouse).